The chain runs to 469 residues: Zinc transporter SLC39A7 (469 aa).

Residues 5–25 form a helical membrane-spanning segment; sequence LGAPHWVAVGLLTWAALGLLV. Basic and acidic residues-rich tracts occupy residues 43–56 and 66–114; these read HGHS…DFHH and HTHE…EHSH. Residues 43–122 are disordered; the sequence is HGHSHRRSHE…SHGGYGESGA (80 aa). His-66 carries the post-translational modification Pros-methylhistidine. 3 helical membrane-spanning segments follow: residues 138–158, 169–189, and 214–234; these read ALGA…LIPV, LQIL…LHLI, and GPIL…LVVE. Over residues 242–255 the composition is skewed to basic residues; sequence GGHGHSHGHGHTHG. The interval 242 to 313 is disordered; the sequence is GGHGHSHGHG…QNSEEEKTGS (72 aa). Residues 256–266 show a composition bias toward low complexity; it reads HTQGSHGHGTQ. Residues Ser-275 and Ser-276 each carry the phosphoserine modification. Positions 295–313 are enriched in basic and acidic residues; the sequence is RLKDGPLRPQNSEEEKTGS. A run of 3 helical transmembrane segments spans residues 386-406, 417-437, and 448-468; these read LTAI…GGAV, GWVL…SVLP, and SLLE…IAHL.

It belongs to the ZIP transporter (TC 2.A.5) family. KE4/Catsup subfamily. Homodimer. Post-translationally, methylation at some His residue by METTL9 leads to reduced zinc-binding. In terms of processing, rapidly phosphorylated by CK2 following Zn(2+) treatment. This phosphorylation is required for efficient cytosolic Zn(2+) release.

Its subcellular location is the endoplasmic reticulum membrane. It is found in the golgi apparatus. The protein localises to the cis-Golgi network membrane. It catalyses the reaction Zn(2+)(in) = Zn(2+)(out). Functionally, transports Zn(2+) from the endoplasmic reticulum (ER)/Golgi apparatus to the cytosol, playing an essential role in the regulation of cytosolic zinc levels. Acts as a gatekeeper of zinc release from intracellular stores, requiring post-translational activation by phosphorylation, resulting in activation of multiple downstream pathways leading to cell growth and proliferation. Has an essential role in B cell development and is required for proper B cell receptor signaling. Plays an important role in maintaining intestinal epithelial homeostasis and skin dermis development by regulating ER function. Controls cell signaling pathways involved in glucose metabolism in skeletal muscle. Has a protective role against ER stress in different biological contexts. Mediates Zn(2+)-induced ferroptosis. This is Zinc transporter SLC39A7 from Canis lupus familiaris (Dog).